The chain runs to 443 residues: Glutamate-rich protein 1 (443 aa).

Lysine 12 carries the N6-acetyllysine modification. Positions 15–333 (QRLFPPVPSG…DASEEDDTIT (319 aa)) are disordered. A compositionally biased stretch (basic and acidic residues) spans 42 to 54 (VTSEKVSQKHAEP). Positions 87 to 97 (SCGSPENASSG) are enriched in polar residues. Composition is skewed to basic residues over residues 109-124 (PKRR…KKFK) and 159-176 (KNKK…RKKA). Over residues 205–226 (ACEEDGVDTSEEDPTLAGEEDV) the composition is skewed to acidic residues. A phosphoserine mark is found at serine 238 and serine 254. Residues 250–266 (GADASEEDPTPAGEEDV) are compositionally biased toward acidic residues. A Phosphothreonine modification is found at threonine 277. The span at 281 to 296 (DLTRAGEEDGKDTREE) shows a compositional bias: basic and acidic residues. The segment covering 297 to 332 (DGADASEEDPTWAGEEEGADSGEEDGADASEEDDTI) has biased composition (acidic residues).

This chain is Glutamate-rich protein 1 (ERICH1), found in Homo sapiens (Human).